We begin with the raw amino-acid sequence, 523 residues long: Apolipoprotein N-acyltransferase (523 aa).

A run of 7 helical transmembrane segments spans residues 26–46, 49–66, 74–94, 109–129, 137–157, 185–205, and 212–232; these read LRFAAPLAALLGVMHTLAFAP, WWWLQILSLAGLAALVRQ, AWVGYAFGLGWFLSGIWWLYI, AAVLLFSAYLALHPALAAWLW, QLSGAASALVFGAAWLVSEWL, LVGVYGVVAIAATLAGLLCAA, and WLAGLAGVAVLAAGWPLHTIA. Positions 246–487 constitute a CN hydrolase domain; it reads LQGNVPQDVK…LGTLQADVQG (242 aa). Residue E284 is the Proton acceptor of the active site. The active site involves K345. The Nucleophile role is filled by C395. A helical membrane pass occupies residues 494–514; the sequence is FVRTGNAPALGAGVLVLLAAL.

The protein belongs to the CN hydrolase family. Apolipoprotein N-acyltransferase subfamily.

It is found in the cell inner membrane. The catalysed reaction is N-terminal S-1,2-diacyl-sn-glyceryl-L-cysteinyl-[lipoprotein] + a glycerophospholipid = N-acyl-S-1,2-diacyl-sn-glyceryl-L-cysteinyl-[lipoprotein] + a 2-acyl-sn-glycero-3-phospholipid + H(+). It participates in protein modification; lipoprotein biosynthesis (N-acyl transfer). In terms of biological role, catalyzes the phospholipid dependent N-acylation of the N-terminal cysteine of apolipoprotein, the last step in lipoprotein maturation. The sequence is that of Apolipoprotein N-acyltransferase from Ralstonia nicotianae (strain ATCC BAA-1114 / GMI1000) (Ralstonia solanacearum).